The chain runs to 637 residues: Biosynthetic arginine decarboxylase (637 aa).

Lysine 101 is modified (N6-(pyridoxal phosphate)lysine). Residue 286-296 (FDVGGGLAVDY) coordinates substrate.

It belongs to the Orn/Lys/Arg decarboxylase class-II family. SpeA subfamily. Mg(2+) is required as a cofactor. It depends on pyridoxal 5'-phosphate as a cofactor.

The enzyme catalyses L-arginine + H(+) = agmatine + CO2. It participates in amine and polyamine biosynthesis; agmatine biosynthesis; agmatine from L-arginine: step 1/1. Its function is as follows. Catalyzes the biosynthesis of agmatine from arginine. This chain is Biosynthetic arginine decarboxylase, found in Shewanella sediminis (strain HAW-EB3).